The sequence spans 337 residues: tRNA N6-adenosine threonylcarbamoyltransferase (337 aa).

Histidine 114 and histidine 118 together coordinate Fe cation. Substrate contacts are provided by residues 136-140, aspartate 169, glycine 182, aspartate 186, and asparagine 275; that span reads LVSGG. Position 301 (aspartate 301) interacts with Fe cation.

This sequence belongs to the KAE1 / TsaD family. Fe(2+) is required as a cofactor.

The protein resides in the cytoplasm. It catalyses the reaction L-threonylcarbamoyladenylate + adenosine(37) in tRNA = N(6)-L-threonylcarbamoyladenosine(37) in tRNA + AMP + H(+). Required for the formation of a threonylcarbamoyl group on adenosine at position 37 (t(6)A37) in tRNAs that read codons beginning with adenine. Is involved in the transfer of the threonylcarbamoyl moiety of threonylcarbamoyl-AMP (TC-AMP) to the N6 group of A37, together with TsaE and TsaB. TsaD likely plays a direct catalytic role in this reaction. The sequence is that of tRNA N6-adenosine threonylcarbamoyltransferase from Streptococcus thermophilus (strain CNRZ 1066).